Reading from the N-terminus, the 268-residue chain is tRNA (guanine-N(7)-)-methyltransferase (268 aa).

The segment at 1-21 is disordered; the sequence is MMAGAEAPQPQKRYYRQRAHS. At Ser21 the chain carries Phosphoserine. Positions 78, 101, 103, 134, 135, and 154 each coordinate S-adenosyl-L-methionine. Asp157 is a catalytic residue. Positions 158-166 are alphaC helix; it reads PHFKRTKHK. S-adenosyl-L-methionine contacts are provided by Thr232 and Glu234. Residues 232 to 240 are alpha6 helix; that stretch reads TEEGKKVLR.

Belongs to the class I-like SAM-binding methyltransferase superfamily. TrmB family. In terms of assembly, catalytic component of the METTL1-WDR4 complex, composed of METTL1 and WDR4. In terms of processing, phosphorylation at Ser-21 by PKB/AKT1 inactivates its methyltransferase activity via a steric interference mechanism in the active site that locally disrupts the catalytic center. Phosphorylation at Ser-21 does not affect the interaction with WDR4.

The protein resides in the nucleus. It carries out the reaction guanosine(46) in tRNA + S-adenosyl-L-methionine = N(7)-methylguanosine(46) in tRNA + S-adenosyl-L-homocysteine. The catalysed reaction is a guanosine in mRNA + S-adenosyl-L-methionine = an N(7)-methylguanosine in mRNA + S-adenosyl-L-homocysteine. The enzyme catalyses a guanosine in miRNA + S-adenosyl-L-methionine = an N(7)-methylguanosine in miRNA + S-adenosyl-L-homocysteine. It participates in tRNA modification; N(7)-methylguanine-tRNA biosynthesis. Its function is as follows. Catalytic component of METTL1-WDR4 methyltransferase complex that mediates the formation of N(7)-methylguanine in a subset of RNA species, such as tRNAs, mRNAs and microRNAs (miRNAs). Catalyzes the formation of N(7)-methylguanine at position 46 (m7G46) in a large subset of tRNAs that contain the 5'-RAGGU-3' motif within the variable loop. M7G46 interacts with C13-G22 in the D-loop to stabilize tRNA tertiary structure and protect tRNAs from decay. Also acts as a methyltransferase for a subset of internal N(7)-methylguanine in mRNAs. Internal N(7)-methylguanine methylation of mRNAs in response to stress promotes their relocalization to stress granules, thereby suppressing their translation. Also methylates a specific subset of miRNAs, such as let-7. N(7)-methylguanine methylation of let-7 miRNA promotes let-7 miRNA processing by disrupting an inhibitory secondary structure within the primary miRNA transcript (pri-miRNA). Acts as a regulator of embryonic stem cell self-renewal and differentiation. This is tRNA (guanine-N(7)-)-methyltransferase from Mus musculus (Mouse).